We begin with the raw amino-acid sequence, 120 residues long: Large ribosomal subunit protein bL20c (120 aa).

Belongs to the bacterial ribosomal protein bL20 family.

It localises to the plastid. Functionally, binds directly to 23S ribosomal RNA and is necessary for the in vitro assembly process of the 50S ribosomal subunit. It is not involved in the protein synthesizing functions of that subunit. This Cuscuta gronovii (Common dodder) protein is Large ribosomal subunit protein bL20c (rpl20).